We begin with the raw amino-acid sequence, 133 residues long: DNA-binding protein inhibitor ID-2-A (133 aa).

The bHLH domain maps to 23-75 (ARSKTPVDDPMSLLYNMNDCYSKLKELVPSIPQNKKVSKMEILQHVIDYILDL). The short motif at 106-115 (LNTDISILSL) is the Nuclear export signal element.

Heterodimer with other HLH proteins. In the embryo, expressed in a range of tissues, with primary expression in the developing pronephros; expressed in the pronephric anlage, and by the swimming tadpole stages expressed robustly in the pronephric tubules and weakly in the pronephric duct. Expressed in the secondary heart field. In the developing nervous system, expressed in the neural crest and in the neural folds during neurula stages, and at stage 20 in the neural tube, ventral mesoderm and mid-hindbrain boundary. By early tailbud stages, expressed in the neural tube, somites and branchial arches. In tadpoles (stage 37/38), expressed in the heart, eye, otic vesicle, somites and branchial arches. Also expressed in migrating muscle cells. Expressed at a low level in limbs, with expression decreasing as limbs develop, but expressed at a high level in blastemas (regenerated limbs), where expression is localized primarily to the blastemal epidermis. Widely expressed in adults with highest expression in the spleen, skin, intestine and brain, and at a much lower level in testis and heart.

The protein resides in the cytoplasm. It localises to the nucleus. Its function is as follows. Transcriptional regulator (lacking a basic DNA binding domain) which negatively regulates the basic helix-loop-helix (bHLH) transcription factors by forming heterodimers and inhibiting their DNA binding and transcriptional activity. Inhibits the activity of both neurogenic (neurod1/neuroD) and myogenic (myod1/myoD) bHLH factors. May play a role in the regulation of the circadian clock. This chain is DNA-binding protein inhibitor ID-2-A (id2-a), found in Xenopus laevis (African clawed frog).